Consider the following 513-residue polypeptide: Cytochrome P450 1A2 (513 aa).

An O-linked (GlcNAc) serine glycan is attached at Ser68. Phe225 contributes to the substrate binding site. Cys456 is a heme binding site.

This sequence belongs to the cytochrome P450 family. In terms of assembly, interacts with PGRMC1; the interaction requires PGRMC1 homodimerization. Heme is required as a cofactor.

Its subcellular location is the endoplasmic reticulum membrane. The protein resides in the microsome membrane. It carries out the reaction an organic molecule + reduced [NADPH--hemoprotein reductase] + O2 = an alcohol + oxidized [NADPH--hemoprotein reductase] + H2O + H(+). The catalysed reaction is 17beta-estradiol + reduced [NADPH--hemoprotein reductase] + O2 = 2-hydroxy-17beta-estradiol + oxidized [NADPH--hemoprotein reductase] + H2O + H(+). The enzyme catalyses 17beta-estradiol + reduced [NADPH--hemoprotein reductase] + O2 = 4-hydroxy-17beta-estradiol + oxidized [NADPH--hemoprotein reductase] + H2O + H(+). It catalyses the reaction estrone + reduced [NADPH--hemoprotein reductase] + O2 = 2-hydroxyestrone + oxidized [NADPH--hemoprotein reductase] + H2O + H(+). It carries out the reaction estrone + reduced [NADPH--hemoprotein reductase] + O2 = 4-hydroxyestrone + oxidized [NADPH--hemoprotein reductase] + H2O + H(+). The catalysed reaction is cholesterol + reduced [NADPH--hemoprotein reductase] + O2 = 25-hydroxycholesterol + oxidized [NADPH--hemoprotein reductase] + H2O + H(+). The enzyme catalyses all-trans-retinol + reduced [NADPH--hemoprotein reductase] + O2 = all-trans-retinal + oxidized [NADPH--hemoprotein reductase] + 2 H2O + H(+). It catalyses the reaction all-trans-retinal + reduced [NADPH--hemoprotein reductase] + O2 = all-trans-retinoate + oxidized [NADPH--hemoprotein reductase] + H2O + 2 H(+). It carries out the reaction (5Z,8Z,11Z,14Z)-eicosatetraenoate + reduced [NADPH--hemoprotein reductase] + O2 = (14R,15S)-epoxy-(5Z,8Z,11Z)-eicosatrienoate + oxidized [NADPH--hemoprotein reductase] + H2O + H(+). The catalysed reaction is (5Z,8Z,11Z,14Z)-eicosatetraenoate + reduced [NADPH--hemoprotein reductase] + O2 = (14S,15R)-epoxy-(5Z,8Z,11Z)-eicosatrienoate + oxidized [NADPH--hemoprotein reductase] + H2O + H(+). The enzyme catalyses (5Z,8Z,11Z,14Z,17Z)-eicosapentaenoate + reduced [NADPH--hemoprotein reductase] + O2 = (17R,18S)-epoxy-(5Z,8Z,11Z,14Z)-eicosatetraenoate + oxidized [NADPH--hemoprotein reductase] + H2O + H(+). It catalyses the reaction (4Z,7Z,10Z,13Z,16Z,19Z)-docosahexaenoate + reduced [NADPH--hemoprotein reductase] + O2 = (19R,20S)-epoxy-(4Z,7Z,10Z,13Z,16Z)-docosapentaenoate + oxidized [NADPH--hemoprotein reductase] + H2O + H(+). It carries out the reaction (5S)-hydroperoxy-(6E,8Z,11Z,14Z)-eicosatetraenoate = 5-oxo-(6E,8Z,11Z,14Z)-eicosatetraenoate + H2O. The catalysed reaction is (12S)-hydroperoxy-(5Z,8Z,10E,14Z)-eicosatetraenoate = 12-oxo-(5Z,8Z,10E,14Z)-eicosatetraenoate + H2O. The enzyme catalyses (15S)-hydroperoxy-(5Z,8Z,11Z,13E)-eicosatetraenoate = 15-oxo-(5Z,8Z,11Z,13E)-eicosatetraenoate + H2O. It catalyses the reaction (13S)-hydroperoxy-(9Z,11E)-octadecadienoate = 13-oxo-(9Z,11E)-octadecadienoate + H2O. It carries out the reaction (5Z,8Z,11Z,14Z)-eicosatetraenoate + reduced [NADPH--hemoprotein reductase] + O2 = 13-hydroxy-(5Z,8Z,11Z,14Z)-eicosatetraenoate + oxidized [NADPH--hemoprotein reductase] + H2O + H(+). The catalysed reaction is (5Z,8Z,11Z,14Z)-eicosatetraenoate + reduced [NADPH--hemoprotein reductase] + O2 = 19-hydroxy-(5Z,8Z,11Z,14Z)-eicosatetraenoate + oxidized [NADPH--hemoprotein reductase] + H2O + H(+). The enzyme catalyses (9Z,12Z)-octadecadienoate + reduced [NADPH--hemoprotein reductase] + O2 = 11-hydroxy-(9Z,12Z)-octadecadienoate + oxidized [NADPH--hemoprotein reductase] + H2O + H(+). It participates in cofactor metabolism; retinol metabolism. The protein operates within steroid metabolism; cholesterol metabolism. It functions in the pathway lipid metabolism; arachidonate metabolism. A cytochrome P450 monooxygenase involved in the metabolism of various endogenous substrates, including fatty acids, steroid hormones and vitamins. Mechanistically, uses molecular oxygen inserting one oxygen atom into a substrate, and reducing the second into a water molecule, with two electrons provided by NADPH via cytochrome P450 reductase (NADPH--hemoprotein reductase). Catalyzes the hydroxylation of carbon-hydrogen bonds. Exhibits high catalytic activity for the formation of hydroxyestrogens from estrone (E1) and 17beta-estradiol (E2), namely 2-hydroxy E1 and E2. Metabolizes cholesterol toward 25-hydroxycholesterol, a physiological regulator of cellular cholesterol homeostasis. May act as a major enzyme for all-trans retinoic acid biosynthesis in the liver. Catalyzes two successive oxidative transformation of all-trans retinol to all-trans retinal and then to the active form all-trans retinoic acid. Primarily catalyzes stereoselective epoxidation of the last double bond of polyunsaturated fatty acids (PUFA), displaying a strong preference for the (R,S) stereoisomer. Catalyzes bisallylic hydroxylation and omega-1 hydroxylation of PUFA. May also participate in eicosanoids metabolism by converting hydroperoxide species into oxo metabolites (lipoxygenase-like reaction, NADPH-independent). Plays a role in the oxidative metabolism of xenobiotics. Catalyzes the N-hydroxylation of heterocyclic amines and the O-deethylation of phenacetin. Metabolizes caffeine via N3-demethylation. The polypeptide is Cytochrome P450 1A2 (Cyp1a2) (Mus musculus (Mouse)).